Reading from the N-terminus, the 466-residue chain is Transcription factor SOX-10 (466 aa).

5 disordered regions span residues 1-67 (MAEE…DDDK), 160-200 (LRMQ…QGGA), 213-275 (DHRH…DFGN), 344-375 (TVSPPGVDAKAQVKTETTGPQGPPHYTDQPST), and 433-466 (RPLYTAISDPSPSGPQSHSPTHWEQPVYTTLSRP). Over residues 23–32 (LSPGSAPSLG) the composition is skewed to low complexity. Position 24 is a phosphoserine (Ser-24). Residues 62-102 (EADDDKFPVCIREAVSQVLSGYDWTLVPMPVRVNGASKSKP) form a dimerization (DIM) region. A DNA-binding region (HMG box) is located at residues 104–172 (VKRPMNAFMV…QHKKDHPDYK (69 aa)). Positions 160 to 173 (LRMQHKKDHPDYKY) are enriched in basic and acidic residues. Over residues 183–200 (AAQGEAECPGGEAEQGGA) the composition is skewed to low complexity. Residues 228–310 (PEHPSGQSHG…LPPNGHPGHV (83 aa)) form a transactivation domain (TAM) region. A compositionally biased stretch (basic and acidic residues) spans 254–271 (ADPKRDGRSLGEGGKPHI). The segment at 353–466 (KAQVKTETTG…QPVYTTLSRP (114 aa)) is transactivation domain (TAC). Residues 440–466 (SDPSPSGPQSHSPTHWEQPVYTTLSRP) are compositionally biased toward polar residues.

In terms of assembly, monomer. Interacts with Armcx3 at the mitochondrial outer membrane surface. Interacts with PAX3. Expressed in oligodendroglia of the spinal tube (at protein level).

It is found in the cytoplasm. Its subcellular location is the nucleus. It localises to the mitochondrion outer membrane. Transcription factor that plays a central role in developing and mature glia. Specifically activates expression of myelin genes, during oligodendrocyte (OL) maturation, such as DUSP15 and MYRF, thereby playing a central role in oligodendrocyte maturation and CNS myelination. Once induced, MYRF cooperates with SOX10 to implement the myelination program. Transcriptional activator of MITF, acting synergistically with PAX3. Transcriptional activator of MBP, via binding to the gene promoter. The sequence is that of Transcription factor SOX-10 (Sox10) from Mus musculus (Mouse).